We begin with the raw amino-acid sequence, 180 residues long: MRILGIDPGLRVTGFGVIDQSGHTLSYVASGVIKTADADLPSRLGTIFEGISTLIRQHSPDQSAIEKVFVNVNPQSTLLLGQARGAAICGLVASGVPVAEYTALQLKQAVVGYGRATKEQMQQMVVRLLNLSGVPGTDAADALGMAICHAHGGTTLSTLGGIAPSLAKKGLRVRRGRLVG.

Catalysis depends on residues Asp-7, Glu-66, and Asp-138. The Mg(2+) site is built by Asp-7, Glu-66, and Asp-138.

This sequence belongs to the RuvC family. Homodimer which binds Holliday junction (HJ) DNA. The HJ becomes 2-fold symmetrical on binding to RuvC with unstacked arms; it has a different conformation from HJ DNA in complex with RuvA. In the full resolvosome a probable DNA-RuvA(4)-RuvB(12)-RuvC(2) complex forms which resolves the HJ. Requires Mg(2+) as cofactor.

Its subcellular location is the cytoplasm. It catalyses the reaction Endonucleolytic cleavage at a junction such as a reciprocal single-stranded crossover between two homologous DNA duplexes (Holliday junction).. Functionally, the RuvA-RuvB-RuvC complex processes Holliday junction (HJ) DNA during genetic recombination and DNA repair. Endonuclease that resolves HJ intermediates. Cleaves cruciform DNA by making single-stranded nicks across the HJ at symmetrical positions within the homologous arms, yielding a 5'-phosphate and a 3'-hydroxyl group; requires a central core of homology in the junction. The consensus cleavage sequence is 5'-(A/T)TT(C/G)-3'. Cleavage occurs on the 3'-side of the TT dinucleotide at the point of strand exchange. HJ branch migration catalyzed by RuvA-RuvB allows RuvC to scan DNA until it finds its consensus sequence, where it cleaves and resolves the cruciform DNA. This chain is Crossover junction endodeoxyribonuclease RuvC, found in Paraburkholderia phytofirmans (strain DSM 17436 / LMG 22146 / PsJN) (Burkholderia phytofirmans).